Consider the following 186-residue polypeptide: ATP synthase subunit delta (186 aa).

Belongs to the ATPase delta chain family. As to quaternary structure, F-type ATPases have 2 components, F(1) - the catalytic core - and F(0) - the membrane proton channel. F(1) has five subunits: alpha(3), beta(3), gamma(1), delta(1), epsilon(1). F(0) has three main subunits: a(1), b(2) and c(10-14). The alpha and beta chains form an alternating ring which encloses part of the gamma chain. F(1) is attached to F(0) by a central stalk formed by the gamma and epsilon chains, while a peripheral stalk is formed by the delta and b chains.

Its subcellular location is the cell inner membrane. Functionally, f(1)F(0) ATP synthase produces ATP from ADP in the presence of a proton or sodium gradient. F-type ATPases consist of two structural domains, F(1) containing the extramembraneous catalytic core and F(0) containing the membrane proton channel, linked together by a central stalk and a peripheral stalk. During catalysis, ATP synthesis in the catalytic domain of F(1) is coupled via a rotary mechanism of the central stalk subunits to proton translocation. This protein is part of the stalk that links CF(0) to CF(1). It either transmits conformational changes from CF(0) to CF(1) or is implicated in proton conduction. The sequence is that of ATP synthase subunit delta from Bacteroides fragilis (strain ATCC 25285 / DSM 2151 / CCUG 4856 / JCM 11019 / LMG 10263 / NCTC 9343 / Onslow / VPI 2553 / EN-2).